A 750-amino-acid chain; its full sequence is Sulfhydryl oxidase 1 (750 aa).

An N-terminal signal peptide occupies residues 1 to 32 (MGRCNRGSGPPSSLLLLLLLLLWLLAVPGASA). The region spanning 39-159 (YSPSDPLTLL…RERLIDALES (121 aa)) is the Thioredoxin domain. Active-site nucleophile residues include Cys73 and Cys76. 2 disulfides stabilise this stretch: Cys73–Cys76 and Cys104–Cys113. N-linked (GlcNAc...) asparagine glycans are attached at residues Asn133 and Asn246. Cysteines 396 and 408 form a disulfide. The 108-residue stretch at 399–506 (SEPHFRGFPC…EDPQFPKVQW (108 aa)) folds into the ERV/ALR sulfhydryl oxidase domain. Positions 404, 411, and 415 each coordinate FAD. The residue at position 429 (Ser429) is a Phosphoserine. Residues Cys452 and Cys455 are joined by a disulfide bond. FAD-binding positions include Asp454, His458, 481 to 488 (WSSHNRVN), Lys503, and Trp506. The cysteines at positions 512 and 515 are disulfide-linked. Asn578 carries N-linked (GlcNAc...) asparagine glycosylation. The tract at residues 578–645 (NSTVDLGKPE…REQPRGQWHL (68 aa)) is disordered. Residues 624 to 639 (PPEHMAELQTNEREQP) show a composition bias toward basic and acidic residues. A helical transmembrane segment spans residues 713–733 (ISLCVGLYSLSFMGLLAMYAY).

The protein belongs to the quiescin-sulfhydryl oxidase (QSOX) family. In terms of assembly, monomer. It depends on FAD as a cofactor. N-glycosylated. O-glycosylated on Thr and Ser residues.

It is found in the golgi apparatus membrane. The protein resides in the secreted. The catalysed reaction is 2 R'C(R)SH + O2 = R'C(R)S-S(R)CR' + H2O2. In terms of biological role, catalyzes the oxidation of sulfhydryl groups in peptide and protein thiols to disulfides with the reduction of oxygen to hydrogen peroxide. Plays a role in disulfide bond formation in a variety of extracellular proteins. In fibroblasts, required for normal incorporation of laminin into the extracellular matrix, and thereby for normal cell-cell adhesion and cell migration. This Pongo abelii (Sumatran orangutan) protein is Sulfhydryl oxidase 1 (QSOX1).